Reading from the N-terminus, the 183-residue chain is Holliday junction branch migration complex subunit RuvA (183 aa).

A domain I region spans residues 1 to 63 (MIVGLIGVVE…EDAHLLYGFL (63 aa)). The domain II stretch occupies residues 64 to 139 (EEGEKILFER…FFIQDENRPA (76 aa)). Position 139 (alanine 139) is a region of interest, flexible linker. Residues 139-183 (ARNEVFLALESLGFKSAEINQVLKTLKPNLSIEAAIKEALQQLRS) are domain III.

Belongs to the RuvA family. In terms of assembly, homotetramer. Forms an RuvA(8)-RuvB(12)-Holliday junction (HJ) complex. HJ DNA is sandwiched between 2 RuvA tetramers; dsDNA enters through RuvA and exits via RuvB. An RuvB hexamer assembles on each DNA strand where it exits the tetramer. Each RuvB hexamer is contacted by two RuvA subunits (via domain III) on 2 adjacent RuvB subunits; this complex drives branch migration. In the full resolvosome a probable DNA-RuvA(4)-RuvB(12)-RuvC(2) complex forms which resolves the HJ.

It localises to the cytoplasm. Its function is as follows. The RuvA-RuvB-RuvC complex processes Holliday junction (HJ) DNA during genetic recombination and DNA repair, while the RuvA-RuvB complex plays an important role in the rescue of blocked DNA replication forks via replication fork reversal (RFR). RuvA specifically binds to HJ cruciform DNA, conferring on it an open structure. The RuvB hexamer acts as an ATP-dependent pump, pulling dsDNA into and through the RuvAB complex. HJ branch migration allows RuvC to scan DNA until it finds its consensus sequence, where it cleaves and resolves the cruciform DNA. This Helicobacter pylori (strain ATCC 700392 / 26695) (Campylobacter pylori) protein is Holliday junction branch migration complex subunit RuvA.